A 393-amino-acid polypeptide reads, in one-letter code: Putative acid--amine ligase HI_0929 (393 aa).

103–105 contributes to the ATP binding site; the sequence is RFD. Residues Asp-105, Glu-117, and Asn-119 each coordinate Mg(2+). ATP is bound by residues Lys-267, Lys-303, Gly-310, Gln-343, and 378 to 380; that span reads AVT.

Belongs to the glutathionylspermidine synthase preATP-grasp family.

May be a ligase forming an amide bond. Shows ATPase activity. This Haemophilus influenzae (strain ATCC 51907 / DSM 11121 / KW20 / Rd) protein is Putative acid--amine ligase HI_0929.